Reading from the N-terminus, the 247-residue chain is Geranylgeranylglyceryl phosphate synthase (247 aa).

Residues aspartate 23 and serine 52 each contribute to the Mg(2+) site. Residues tyrosine 171–glycine 177, glycine 203–glycine 204, and glycine 225–threonine 226 each bind sn-glycerol 1-phosphate.

Belongs to the GGGP/HepGP synthase family. Group II subfamily. It depends on Mg(2+) as a cofactor.

It localises to the cytoplasm. The enzyme catalyses sn-glycerol 1-phosphate + (2E,6E,10E)-geranylgeranyl diphosphate = sn-3-O-(geranylgeranyl)glycerol 1-phosphate + diphosphate. It participates in membrane lipid metabolism; glycerophospholipid metabolism. Its function is as follows. Prenyltransferase that catalyzes the transfer of the geranylgeranyl moiety of geranylgeranyl diphosphate (GGPP) to the C3 hydroxyl of sn-glycerol-1-phosphate (G1P). This reaction is the first ether-bond-formation step in the biosynthesis of archaeal membrane lipids. The chain is Geranylgeranylglyceryl phosphate synthase from Methanosarcina mazei (strain ATCC BAA-159 / DSM 3647 / Goe1 / Go1 / JCM 11833 / OCM 88) (Methanosarcina frisia).